The chain runs to 282 residues: Putative 4-diphosphocytidyl-2-C-methyl-D-erythritol kinase (282 aa).

Lysine 9 is a catalytic residue. 93–103 (PVSAGLAGGSA) is an ATP binding site. Aspartate 135 is a catalytic residue.

The protein belongs to the GHMP kinase family. IspE subfamily.

The enzyme catalyses 4-CDP-2-C-methyl-D-erythritol + ATP = 4-CDP-2-C-methyl-D-erythritol 2-phosphate + ADP + H(+). Catalyzes the phosphorylation of the position 2 hydroxy group of 4-diphosphocytidyl-2C-methyl-D-erythritol. In Staphylococcus aureus (strain MRSA252), this protein is Putative 4-diphosphocytidyl-2-C-methyl-D-erythritol kinase.